Here is a 998-residue protein sequence, read N- to C-terminus: Methyl sulfide methyltransferase-associated sensor (998 aa).

The PAS 1 domain maps to 40 to 77 (FGYSPKDFISGGLGYADIIYPADLEIAVSQFFSYVEKD). The 53-residue stretch at 117-169 (FTQQYRLLNKSGDVLWVEAEIKVLEEEEGKAGLFQVTVFDISRWKHTEKAMPA) folds into the PAC 1 domain. Residues 209–246 (LGYTPEDFTSGRIVYTDIIHPDDLDNVRAEVSKNTEEG) enclose the PAS 2 domain. The region spanning 250 to 302 (FSKEYRVLAKSGEVRYVDERTLIRRNEKGEITCYQGILLDITQRKEAEELILS) is the PAC 2 domain. One can recognise a GAF 1 domain in the interval 314 to 458 (ASLDEVLLLL…NAYLAGIAIE (145 aa)). A PAS 3 domain is found at 469-540 (SENRFRTIFD…ENMQKIKAEG (72 aa)). In terms of domain architecture, GAF 2 spans 609–752 (ASLKEITDFA…LMQGMWQLIQ (144 aa)). Cys-656 contacts heme. One can recognise a Histidine kinase domain in the interval 783-998 (EFVEEMMFPE…GNLMHVKLPK (216 aa)).

Requires heme as cofactor. In terms of processing, autophosphorylates: autophosphorylation is dependent on the redox state of heme cofactor and is promoted upon reduction.

The protein resides in the cytoplasm. It catalyses the reaction ATP + protein L-histidine = ADP + protein N-phospho-L-histidine.. In terms of biological role, heme-binding sensor kinase component part of a two-component regulatory system involved in methyl sulfide metabolism. Does not act as a phytochrome-like photoreceptor. The chain is Methyl sulfide methyltransferase-associated sensor (msmS) from Methanosarcina acetivorans (strain ATCC 35395 / DSM 2834 / JCM 12185 / C2A).